Consider the following 555-residue polypeptide: Probable metabolite transport protein YDR387C (555 aa).

Over 1–39 (MSTDESEDVYSDLYSIISQVTSNTANDIEQLPYALTFKT) the chain is Cytoplasmic. The helical transmembrane segment at 40–60 (SLIFVGATIGGLLFGYDTGVI) threads the bilayer. At 61–83 (SGVLLSLKPEDLSLVVLTDVQKE) the chain is on the extracellular side. A helical membrane pass occupies residues 84–104 (LITSSTSVGSFFGSILAFPLA). Residues 105-118 (DRYGRRITLAICCS) are Cytoplasmic-facing. The chain crosses the membrane as a helical span at residues 119-139 (IFILAAIGMAIARTLTFLICG). Arg-140 is a topological domain (extracellular). A helical membrane pass occupies residues 141–161 (LLVGIAVGVSAQCVPLFLSEI). Residues 162–168 (SPSRIRG) lie on the Cytoplasmic side of the membrane. A helical membrane pass occupies residues 169–189 (FMLTLNIIAITGGQLVSYVIA). Residues 190–200 (SLMKEIDNSWR) are Extracellular-facing. The chain crosses the membrane as a helical span at residues 201–221 (YLFALSAIPAILFLSILDFIP). Residues 222–356 (ESPRWSISKG…TIRALIVGCM (135 aa)) are Cytoplasmic-facing. Residues 289 to 313 (SSTSGTLSPPNIKRLSSNTERTSNT) are disordered. The chain crosses the membrane as a helical span at residues 357–377 (LMFFQQITGFNAFMYYAAIIF). Over 378-384 (SKFNIKN) the chain is Extracellular. A helical transmembrane segment spans residues 385–405 (PLLPPILIASTNFIFTFFAMY). The Cytoplasmic portion of the chain corresponds to 406–413 (TMDSLGRR). Residues 414–434 (AILLRTILIMTVGLLLCSVGF) traverse the membrane as a helical segment. Residues 435–440 (GHDQVN) lie on the Extracellular side of the membrane. Residues 441–461 (LLLISVVIYVAAYASAMGSVP) form a helical membrane-spanning segment. Over 462–474 (WTCVEFLPLNRRS) the chain is Cytoplasmic. A helical membrane pass occupies residues 475–497 (FGASCIACTNWLTNAFVSMTYLS). The Extracellular portion of the chain corresponds to 498–506 (TINTIGDEN). A helical membrane pass occupies residues 507–527 (TMLIFAFFTVCAWFFVYFWYP). The Cytoplasmic segment spans residues 528-555 (EVKGLSLEEVGRVFDNGIDVHYVFRTYH).

It belongs to the major facilitator superfamily. Sugar transporter (TC 2.A.1.1) family.

The protein localises to the membrane. In Saccharomyces cerevisiae (strain ATCC 204508 / S288c) (Baker's yeast), this protein is Probable metabolite transport protein YDR387C.